Here is a 719-residue protein sequence, read N- to C-terminus: DIVEKDPVKTSFERWAQPGHFSKNLAKGPSTTTWIWNLHADAHDFDSHTNDLEDISRKIFGAHFGQLAIIFIWLSGMYFHGARFSNYEAWLNDPTHVKPSAQVVWPIVGQEILNGDVGGGFQGIQITSGFFQLWRASGITNELQLYCTAVGALIFAGLMFFAGWFHYHKAAPKLAWFQNVESMLNHHLAGLLGLGSLGWAGHQIHVSLPINQLLDAGVDSKEVPLPHEFILNREILTQAYPSFAKGLIPFFTLDWSEYSDFLTFRGGLNPVTGGLWLTDTAHHHLAIAVLFLVAGHMYRTNWGIGHSTREILEAHKGPFTGEGHKGLYEILTSSWHAQLAINLAMLGSLTIIVSHHMYAMPPYPYLATDYATQLSLFTHHMWIGGFLVVGAAAHAAIFMVRDYDPTTQYNNLLDRVIRHRDAIISHLNWVCIFLGFHSFGLYIHNDTMSALGRPQDMFSDTAIQLQPIFAQWVQNTHALAPGSTAPNAAAATSLTWGGSNLVAVGGKIAISPITLGTADFLVHHIHAFTIHVTVLILLKGVLFARSSRLIPDKANLGFRFPCDGPGRGGTCQVSAWDHVFLGLFWMYNSISVVIFHFSWKMQSDVWGSISEQGVINHITGGNFAQSSTTINGWLRDFLWAQASQVIQSYGSSLSAYGLLFLGAHFVWAFSLMFLFSGRGYWQELIESIVWAHNKLKVAPVTQPRALSIIQGRAVGVTHT.

The next 8 helical transmembrane spans lie at 59 to 82, 145 to 168, 184 to 208, 280 to 298, 335 to 358, 374 to 400, 422 to 444, and 520 to 538; these read IFGAHFGQLAIIFIWLSGMYFHGA, LYCTAVGALIFAGLMFFAGWFHYH, LNHHLAGLLGLGSLGWAGHQIHVSL, TAHHHLAIAVLFLVAGHMY, WHAQLAINLAMLGSLTIIVSHHMY, LSLFTHHMWIGGFLVVGAAAHAAIFMV, AIISHLNWVCIFLGFHSFGLYIH, and FLVHHIHAFTIHVTVLILL. Residues Cys562 and Cys571 each contribute to the [4Fe-4S] cluster site. Transmembrane regions (helical) follow at residues 578 to 599 and 653 to 675; these read HVFLGLFWMYNSISVVIFHFSW and LSAYGLLFLGAHFVWAFSLMFLF. Chlorophyll a' is bound at residue His664. Chlorophyll a is bound by residues Met672 and Tyr680. Trp681 is a binding site for phylloquinone. A helical transmembrane segment spans residues 713 to 719; the sequence is AVGVTHT.

It belongs to the PsaA/PsaB family. As to quaternary structure, the PsaA/B heterodimer binds the P700 chlorophyll special pair and subsequent electron acceptors. PSI consists of a core antenna complex that captures photons, and an electron transfer chain that converts photonic excitation into a charge separation. The eukaryotic PSI reaction center is composed of at least 11 subunits. P700 is a chlorophyll a/chlorophyll a' dimer, A0 is one or more chlorophyll a, A1 is one or both phylloquinones and FX is a shared 4Fe-4S iron-sulfur center. serves as cofactor.

It localises to the plastid. The protein localises to the chloroplast thylakoid membrane. The enzyme catalyses reduced [plastocyanin] + hnu + oxidized [2Fe-2S]-[ferredoxin] = oxidized [plastocyanin] + reduced [2Fe-2S]-[ferredoxin]. PsaA and PsaB bind P700, the primary electron donor of photosystem I (PSI), as well as the electron acceptors A0, A1 and FX. PSI is a plastocyanin-ferredoxin oxidoreductase, converting photonic excitation into a charge separation, which transfers an electron from the donor P700 chlorophyll pair to the spectroscopically characterized acceptors A0, A1, FX, FA and FB in turn. Oxidized P700 is reduced on the lumenal side of the thylakoid membrane by plastocyanin. The sequence is that of Photosystem I P700 chlorophyll a apoprotein A1 from Asplenium nidus (Bird's nest fern).